A 220-amino-acid polypeptide reads, in one-letter code: Protein-L-isoaspartate O-methyltransferase (220 aa).

Residue Ser67 is part of the active site.

It belongs to the methyltransferase superfamily. L-isoaspartyl/D-aspartyl protein methyltransferase family.

The protein resides in the cytoplasm. It catalyses the reaction [protein]-L-isoaspartate + S-adenosyl-L-methionine = [protein]-L-isoaspartate alpha-methyl ester + S-adenosyl-L-homocysteine. In terms of biological role, catalyzes the methyl esterification of L-isoaspartyl residues in peptides and proteins that result from spontaneous decomposition of normal L-aspartyl and L-asparaginyl residues. It plays a role in the repair and/or degradation of damaged proteins. The polypeptide is Protein-L-isoaspartate O-methyltransferase (Chlorobium phaeobacteroides (strain BS1)).